The chain runs to 33 residues: Potassium channel toxin alpha-KTx 10.4 (33 aa).

Intrachain disulfides connect Cys3/Cys22, Cys8/Cys27, and Cys12/Cys29.

It belongs to the short scorpion toxin superfamily. Potassium channel inhibitor family. Alpha-KTx 10 subfamily. Expressed by the venom gland.

Its subcellular location is the secreted. In terms of biological role, blocks human voltage-gated potassium channel Kv1.2/KCNA2 (IC(50)=3.6 nM) and Kv1.3/KCNA3 (IC(50)=72 nM). The protein is Potassium channel toxin alpha-KTx 10.4 of Centruroides tecomanus (Scorpion).